The sequence spans 118 residues: Succinate dehydrogenase assembly factor 1, mitochondrial (118 aa).

Residues Leu14–Arg16 carry the LYR motif 1; required for interaction with HSC20 motif. Positions Leu53–Arg55 match the LYR motif 2; not required for interaction with HSC20 motif. Residues Leu53 to Arg65 form an interaction with SDHB region. The interval His68 to Arg118 is disordered. Residues Arg94–Arg118 are compositionally biased toward basic and acidic residues.

The protein belongs to the complex I LYR family. SDHAF1 subfamily. In terms of assembly, interacts with SDHB within an SDHA-SDHB subcomplex. Also interacts with the iron-sulfur transfer complex formed by HSC20, HSPA9 and ISCU through direct binding to HSC20. Binding of SDHAF1 to SDHB precedes and is necessary for recruitment of the iron-sulfur transfer complex by SDHAF1.

Its subcellular location is the mitochondrion matrix. In terms of biological role, plays an essential role in the assembly of succinate dehydrogenase (SDH), an enzyme complex (also referred to as respiratory complex II) that is a component of both the tricarboxylic acid (TCA) cycle and the mitochondrial electron transport chain, and which couples the oxidation of succinate to fumarate with the reduction of ubiquinone (coenzyme Q) to ubiquinol. Promotes maturation of the iron-sulfur protein subunit Sdhb of the SDH catalytic dimer, protecting it from the deleterious effects of oxidants. May act together with SDHAF3. Contributes to iron-sulfur cluster incorporation into SDHB by binding to SDHB and recruiting the iron-sulfur transfer complex formed by HSC20, HSPA9 and ISCU through direct binding to HSC20. This chain is Succinate dehydrogenase assembly factor 1, mitochondrial, found in Mus musculus (Mouse).